A 3916-amino-acid polypeptide reads, in one-letter code: Fusarin C synthetase (3916 aa).

One can recognise a Ketosynthase family 3 (KS3) domain in the interval 9–440 (KEPIAIIGTS…GTNVHAIIEQ (432 aa)). Active-site for beta-ketoacyl synthase activity residues include cysteine 182, histidine 319, and histidine 360. The interval 548–866 (VFTGQGAQWP…QGTVARNIHD (319 aa)) is malonyl-CoA:ACP transacylase (MAT) domain. An N-terminal hotdog fold region spans residues 935-1068 (HPLLGARSVE…GQLRVEFGCS (134 aa)). Residues 935–1228 (HPLLGARSVE…GLTCTSLLRP (294 aa)) are dehydratase (DH) domain. The region spanning 935 to 1231 (HPLLGARSVE…CTSLLRPGPS (297 aa)) is the PKS/mFAS DH domain. Histidine 967 acts as the Proton acceptor; for dehydratase activity in catalysis. A C-terminal hotdog fold region spans residues 1084 to 1231 (LTSVNMERFY…CTSLLRPGPS (148 aa)). The Proton donor; for dehydratase activity role is filled by aspartate 1141. Positions 1347 to 1575 (IQAVGENLPS…VNDFVDAEKY (229 aa)) are C-methyltransferase (CMeT) domain. The ketoreductase (KR) domain 1 stretch occupies residues 2092–2266 (TYLLIGCTGG…AASVMHIGMV (175 aa)). One can recognise a Carrier 1 domain in the interval 2372 to 2449 (EILAVVEEEF…ELCSTVVSHL (78 aa)). Position 2409 is an O-(pantetheine 4'-phosphoryl)serine (serine 2409). The segment at 2487 to 2510 (NEPFTIRNSPNSTQVTSEAGVDED) is disordered. The segment covering 2492–2503 (IRNSPNSTQVTS) has biased composition (polar residues). Residues 2522 to 2806 (PLSFAQERLW…VNLLPLRLKI (285 aa)) are condensation. The interval 2975 to 3385 (EFVVKQPDDT…RIAGDSQIKL (411 aa)) is adenylation. The 78-residue stretch at 3493–3570 (KPLTETQERL…EMAAKIDGST (78 aa)) folds into the Carrier 2 domain. Serine 3530 is subject to O-(pantetheine 4'-phosphoryl)serine. Residues 3612–3833 (LTGATGFLGV…DFVPVDVVAA (222 aa)) are thiolester reductase (R) domain.

It in the C-terminal section; belongs to the NRP synthetase family.

It functions in the pathway mycotoxin biosynthesis. Its function is as follows. Fusarin C synthetase; part of the gene cluster that mediates the biosynthesis of the mycotoxin fusarin C. Within the cluster, FUS1, FUS2, FUS8 and FUS9 are sufficient for fusarin production. The roles of the other FUS members are yet undetermined. The fusarin C synthetase FUS1 is responsible for the condensation of one acetyl-coenzyme A (CoA) unit with six malonyl-CoA units and the amide linkage of the arising heptaketide and homoserine, subsequently releasing the first intermediate, prefusarin, as an alcohol with an open ring structure. The cytochrome P450 monooxygenase FUS8 participates in multiple oxidation processes at carbon C-20 and is able to use the FUS1 product as substrate, resulting in formation of 20-hydroxy-prefusarin. This reaction seems to be essential before the 2-pyrrolidone ring closure can be catalyzed by FUS2, generating 20-hydroxy-fusarin. FUS8 is able to further oxidizes carbon C-20 after ring closure, resulting in the formation of carboxy-fusarin C. As the last step, FUS9 methylates the hydroxyl group at C-21 to generate fusarin C. Fusarin C can then rearrange to epi-fusarin C, the (z)-isomers, and fusarin A and fusarin D. The sequence is that of Fusarin C synthetase from Gibberella fujikuroi (strain CBS 195.34 / IMI 58289 / NRRL A-6831) (Bakanae and foot rot disease fungus).